A 921-amino-acid polypeptide reads, in one-letter code: Bifunctional aspartokinase/homoserine dehydrogenase, chloroplastic (921 aa).

Residues 1–87 (SLSSAISPSS…DDSVEKVHLP (87 aa)) constitute a chloroplast transit peptide. Positions 88 to 339 (RGAMWSIHKF…VSEAVVLKTL (252 aa)) are aspartokinase. An interface region spans residues 340–567 (SYQEAWEMSY…LSRTTIAVGI (228 aa)). ACT domains are found at residues 417-489 (VEGT…QVAN) and 498-575 (TVGQ…LIGA). The interval 568–921 (VGPGLIGATL…RLASYLGAPS (354 aa)) is homoserine dehydrogenase. Ile573 contacts NAD(+). NADP(+)-binding residues include Ile573, Arg605, Thr654, and Lys678. An NADPH-binding site is contributed by Ile573. Thr654 contributes to the NAD(+) binding site. Positions 654 and 678 each coordinate NADPH. Residues Glu705, Val708, Ala710, and Leu712 each contribute to the Na(+) site. 2 residues coordinate NADP(+): Gly763 and Glu766. Positions 766 and 777 each coordinate L-homoserine. Lys781 serves as the catalytic Proton donor. Gly898 contacts NAD(+). Gly898 contacts NADP(+). Residue Gly898 coordinates NADPH.

In the N-terminal section; belongs to the aspartokinase family. It in the C-terminal section; belongs to the homoserine dehydrogenase family. Requires a metal cation as cofactor.

It is found in the plastid. The protein resides in the chloroplast. It catalyses the reaction L-homoserine + NADP(+) = L-aspartate 4-semialdehyde + NADPH + H(+). The catalysed reaction is L-homoserine + NAD(+) = L-aspartate 4-semialdehyde + NADH + H(+). The enzyme catalyses L-aspartate + ATP = 4-phospho-L-aspartate + ADP. The protein operates within amino-acid biosynthesis; L-lysine biosynthesis via DAP pathway; (S)-tetrahydrodipicolinate from L-aspartate: step 1/4. It functions in the pathway amino-acid biosynthesis; L-methionine biosynthesis via de novo pathway; L-homoserine from L-aspartate: step 1/3. Its pathway is amino-acid biosynthesis; L-methionine biosynthesis via de novo pathway; L-homoserine from L-aspartate: step 3/3. It participates in amino-acid biosynthesis; L-threonine biosynthesis; L-threonine from L-aspartate: step 1/5. The protein operates within amino-acid biosynthesis; L-threonine biosynthesis; L-threonine from L-aspartate: step 3/5. Functionally, bifunctional aspartate kinase and homoserine dehydrogenase that catalyzes the first and the third steps toward the synthesis of lysine, methionine and threonine from aspartate. The protein is Bifunctional aspartokinase/homoserine dehydrogenase, chloroplastic of Daucus carota (Wild carrot).